A 2551-amino-acid polypeptide reads, in one-letter code: Probable polyketide synthase 13 (2551 aa).

One can recognise a Ketosynthase family 3 (KS3) domain in the interval Glu10 to Gln434. Residues Cys176, His317, and His358 each act as for beta-ketoacyl synthase activity in the active site. The tract at residues Gly621–Tyr654 is acyl/malonyl transferase. Catalysis depends on Ser631, which acts as the For acyl/malonyl transferase activity. Residues Thr928–Ser1057 are N-terminal hotdog fold. The 299-residue stretch at Thr928 to Ser1226 folds into the PKS/mFAS DH domain. His961 functions as the Proton acceptor; for dehydratase activity in the catalytic mechanism. Residues Asn1076–Ser1226 form a C-terminal hotdog fold region. Asp1136 acts as the Proton donor; for dehydratase activity in catalysis. Positions Asp2465 to Phe2542 constitute a Carrier domain. Position 2502 is an O-(pantetheine 4'-phosphoryl)serine (Ser2502).

Pantetheine 4'-phosphate is required as a cofactor.

Functionally, probable polyketide synthase. In Dictyostelium discoideum (Social amoeba), this protein is Probable polyketide synthase 13 (pks13).